The chain runs to 270 residues: Aliphatic sulfonates import ATP-binding protein SsuB (270 aa).

Residues 17–238 (LASSGLRKTF…ARGSHRLAAL (222 aa)) form the ABC transporter domain. An ATP-binding site is contributed by 49 to 56 (GRSGCGKS). Positions 249–270 (APGAAPEPDPVAPLPTQLRWAH) are disordered.

Belongs to the ABC transporter superfamily. Aliphatic sulfonates importer (TC 3.A.1.17.2) family. In terms of assembly, the complex is composed of two ATP-binding proteins (SsuB), two transmembrane proteins (SsuC) and a solute-binding protein (SsuA).

The protein localises to the cell inner membrane. The catalysed reaction is ATP + H2O + aliphatic sulfonate-[sulfonate-binding protein]Side 1 = ADP + phosphate + aliphatic sulfonateSide 2 + [sulfonate-binding protein]Side 1.. Its function is as follows. Part of the ABC transporter complex SsuABC involved in aliphatic sulfonates import. Responsible for energy coupling to the transport system. This Pseudomonas putida (Arthrobacter siderocapsulatus) protein is Aliphatic sulfonates import ATP-binding protein SsuB.